The following is a 201-amino-acid chain: Small ribosomal subunit protein uS4c (201 aa).

The disordered stretch occupies residues 20–39 (GLTRKTPKSGSNLKKKFHSG). Residues 89–150 (MRLDNILFRL…NQRSKRLVQN (62 aa)) form the S4 RNA-binding domain.

Belongs to the universal ribosomal protein uS4 family. Part of the 30S ribosomal subunit. Contacts protein S5. The interaction surface between S4 and S5 is involved in control of translational fidelity.

The protein resides in the plastid. It localises to the chloroplast. Functionally, one of the primary rRNA binding proteins, it binds directly to 16S rRNA where it nucleates assembly of the body of the 30S subunit. In terms of biological role, with S5 and S12 plays an important role in translational accuracy. The polypeptide is Small ribosomal subunit protein uS4c (rps4) (Oryza nivara (Indian wild rice)).